The following is a 370-amino-acid chain: N-acetyltaurine hydrolase (370 aa).

A divalent metal cation is bound by residues His26, His28, Glu189, His221, His250, and Asp318.

Belongs to the metallo-dependent hydrolases superfamily. Phosphotriesterase family. The cofactor is a divalent metal cation.

The protein localises to the cytoplasm. It localises to the cytosol. It carries out the reaction N-acetyltaurine + H2O = taurine + acetate. In terms of biological role, N-acetyltaurine hydrolase catalyzes the hydrolysis of N-acetyltaurine into taurine and acetate. The sequence is that of N-acetyltaurine hydrolase (pter) from Dictyostelium discoideum (Social amoeba).